The primary structure comprises 248 residues: 3-deoxy-manno-octulosonate cytidylyltransferase (248 aa).

Belongs to the KdsB family.

The protein localises to the cytoplasm. The catalysed reaction is 3-deoxy-alpha-D-manno-oct-2-ulosonate + CTP = CMP-3-deoxy-beta-D-manno-octulosonate + diphosphate. The protein operates within nucleotide-sugar biosynthesis; CMP-3-deoxy-D-manno-octulosonate biosynthesis; CMP-3-deoxy-D-manno-octulosonate from 3-deoxy-D-manno-octulosonate and CTP: step 1/1. It participates in bacterial outer membrane biogenesis; lipopolysaccharide biosynthesis. Activates KDO (a required 8-carbon sugar) for incorporation into bacterial lipopolysaccharide in Gram-negative bacteria. The protein is 3-deoxy-manno-octulosonate cytidylyltransferase of Enterobacter sp. (strain 638).